Reading from the N-terminus, the 458-residue chain is Repulsive guidance molecule A (458 aa).

Positions 1-53 (MGGPGPRRAGTSRERLVVTGRAGWMGMGRGAGRSALGFWPTLAFLLCSFPAAT) are cleaved as a signal peptide. Residues 54–176 (SPCKILKCNS…NYTHCGLFGD (123 aa)) constitute a propeptide, removed in mature form. A compositionally biased stretch (polar residues) spans 121-133 (HNCSKDGPTSQPR). A disordered region spans residues 121–149 (HNCSKDGPTSQPRLHTLPPAGDSQERSDS). 2 N-linked (GlcNAc...) asparagine glycosylation sites follow: N122 and N167. 2 disulfides stabilise this stretch: C153–C234 and C171–C323. An N-linked (GlcNAc...) asparagine glycan is attached at N397. A lipid anchor (GPI-anchor amidated alanine) is attached at A433. Positions 434–458 (AGLPLAPQPLLGALILLLALFPVFC) are cleaved as a propeptide — removed in mature form.

It belongs to the repulsive guidance molecule (RGM) family. In terms of assembly, interacts with NEO1, BMP2 and BMP4. Autocatalytically cleaved at low pH; the two chains remain linked via two disulfide bonds.

It localises to the cell membrane. Functionally, member of the repulsive guidance molecule (RGM) family that performs several functions in the developing and adult nervous system. Regulates cephalic neural tube closure, inhibits neurite outgrowth and cortical neuron branching, and the formation of mature synapses. Binding to its receptor NEO1/neogenin induces activation of RHOA-ROCK1/Rho-kinase signaling pathway through UNC5B-ARHGEF12/LARG-PTK2/FAK1 cascade, leading to collapse of the neuronal growth cone and neurite outgrowth inhibition. Furthermore, RGMA binding to NEO1/neogenin leads to HRAS inactivation by influencing HRAS-PTK2/FAK1-AKT1 pathway. It also functions as a bone morphogenetic protein (BMP) coreceptor that may signal through SMAD1, SMAD5, and SMAD8. This is Repulsive guidance molecule A (RGMA) from Macaca fascicularis (Crab-eating macaque).